Consider the following 378-residue polypeptide: Ribosomal RNA large subunit methyltransferase G (378 aa).

The protein belongs to the methyltransferase superfamily. RlmG family.

Its subcellular location is the cytoplasm. The catalysed reaction is guanosine(1835) in 23S rRNA + S-adenosyl-L-methionine = N(2)-methylguanosine(1835) in 23S rRNA + S-adenosyl-L-homocysteine + H(+). Functionally, specifically methylates the guanine in position 1835 (m2G1835) of 23S rRNA. The sequence is that of Ribosomal RNA large subunit methyltransferase G from Salmonella agona (strain SL483).